A 122-amino-acid chain; its full sequence is MADSVHFPWMPFPPRFLVCTRDDIYEDENGRQWVVAKVETSRSPYGSRIETCITVHLQHMTTIPQEPTPQQPINNNSLPTMWRLESMNTYTGTDGTYWRLLDHSQMGDTLQLILDIVICEVD.

The protein belongs to the TCL1 family.

The sequence is that of Protein TCL1B3 (Tcl1b3) from Mus musculus (Mouse).